Consider the following 191-residue polypeptide: UPF0302 protein SA1295 (191 aa).

It belongs to the UPF0302 family.

The sequence is that of UPF0302 protein SA1295 from Staphylococcus aureus (strain N315).